We begin with the raw amino-acid sequence, 356 residues long: tRNA N6-adenosine threonylcarbamoyltransferase (356 aa).

Positions 115 and 119 each coordinate Fe cation. Substrate-binding positions include 138–142 (LVSGG), D171, G184, and N283. D311 is a binding site for Fe cation.

This sequence belongs to the KAE1 / TsaD family. The cofactor is Fe(2+).

Its subcellular location is the cytoplasm. It carries out the reaction L-threonylcarbamoyladenylate + adenosine(37) in tRNA = N(6)-L-threonylcarbamoyladenosine(37) in tRNA + AMP + H(+). Required for the formation of a threonylcarbamoyl group on adenosine at position 37 (t(6)A37) in tRNAs that read codons beginning with adenine. Is involved in the transfer of the threonylcarbamoyl moiety of threonylcarbamoyl-AMP (TC-AMP) to the N6 group of A37, together with TsaE and TsaB. TsaD likely plays a direct catalytic role in this reaction. The sequence is that of tRNA N6-adenosine threonylcarbamoyltransferase from Synechococcus sp. (strain WH7803).